The sequence spans 197 residues: MKQFIDFIPLLLFFIVYKLDPRPMEVAGHSFEFGGIYSATAMLIISSLVVYGALFLRQRKLKKGQWLTLIACLVFGGLTLTFHSETFLKWKAPVVNWLFALGFAGSHFIGDRVLIKRIMGHALTLPDAIWSRLNLAWIAFFLFCGAANLFVAFTFQDFWVDFKVFGSLGMTVIFLVAQGVYLSRHLHDDPSTSKPKD.

5 helical membrane-spanning segments follow: residues 36-56 (IYSA…ALFL), 64-84 (GQWL…TFHS), 90-110 (WKAP…HFIG), 135-155 (LAWI…AFTF), and 162-182 (FKVF…GVYL).

It belongs to the YciB family.

The protein resides in the cell inner membrane. Plays a role in cell envelope biogenesis, maintenance of cell envelope integrity and membrane homeostasis. This Pseudomonas putida (strain GB-1) protein is Inner membrane-spanning protein YciB.